Reading from the N-terminus, the 201-residue chain is Small ribosomal subunit protein uS4c (201 aa).

The tract at residues 15-43 (LGALPGLTSKRPTPGSDLRNQSRSGKRSQ) is disordered. The S4 RNA-binding domain occupies 89–149 (MRLDNILFRL…DEQKSRALIQ (61 aa)).

The protein belongs to the universal ribosomal protein uS4 family. As to quaternary structure, part of the 30S ribosomal subunit. Contacts protein S5. The interaction surface between S4 and S5 is involved in control of translational fidelity.

It is found in the plastid. The protein resides in the chloroplast. Functionally, one of the primary rRNA binding proteins, it binds directly to 16S rRNA where it nucleates assembly of the body of the 30S subunit. With S5 and S12 plays an important role in translational accuracy. The polypeptide is Small ribosomal subunit protein uS4c (rps4) (Nandina domestica (Heavenly bamboo)).